A 358-amino-acid chain; its full sequence is Peptide chain release factor 1 (358 aa).

An N5-methylglutamine modification is found at Gln-232.

This sequence belongs to the prokaryotic/mitochondrial release factor family. Methylated by PrmC. Methylation increases the termination efficiency of RF1.

Its subcellular location is the cytoplasm. Its function is as follows. Peptide chain release factor 1 directs the termination of translation in response to the peptide chain termination codons UAG and UAA. This chain is Peptide chain release factor 1, found in Acidobacterium capsulatum (strain ATCC 51196 / DSM 11244 / BCRC 80197 / JCM 7670 / NBRC 15755 / NCIMB 13165 / 161).